A 378-amino-acid chain; its full sequence is GDP-mannose-dependent alpha-mannosyltransferase (378 aa).

This sequence belongs to the glycosyltransferase group 1 family. Glycosyltransferase 4 subfamily.

It functions in the pathway phospholipid metabolism; phosphatidylinositol metabolism. Functionally, catalyzes the addition of a mannose residue from GDP-D-mannose to GlcAGroAc2 to generate 1,2-di-O-C16/C18:1-(alpha-D-mannopyranosyl)-(1-4)-(alpha-D-glucopyranosyluronic acid)-(1-3)-glycerol(ManGlcAGroAc2). In Mycobacterium tuberculosis (strain CDC 1551 / Oshkosh), this protein is GDP-mannose-dependent alpha-mannosyltransferase (mgtA).